Consider the following 250-residue polypeptide: Probable aquaporin TIP-type (250 aa).

A run of 2 helical transmembrane segments spans residues 20-42 and 55-77; these read AYVA…AIAY and GLVA…AANV. An NPA 1 motif is present at residues 83–85; sequence NPA. The next 3 helical transmembrane spans lie at 97-119, 140-162, and 172-194; these read TILT…CLLL, IQGV…ATAA, and IAPI…FSGG. An NPA 2 motif is present at residues 197-199; it reads NPA. A helical transmembrane segment spans residues 215 to 237; the sequence is WIYWAGPLIGGALAGFIYGDVFI.

The protein belongs to the MIP/aquaporin (TC 1.A.8) family. TIP (TC 1.A.8.10) subfamily. As to expression, expressed in mature seeds and dark-grown seedlings.

The protein resides in the vacuole membrane. Channel protein in tonoplast. These proteins may allow the diffusion of amino acids and/or peptides from the vacuolar compartment to the cytoplasm. The polypeptide is Probable aquaporin TIP-type (DIP) (Antirrhinum majus (Garden snapdragon)).